Reading from the N-terminus, the 319-residue chain is 4-diphosphocytidyl-2-C-methyl-D-erythritol kinase (319 aa).

Lysine 21 is an active-site residue. Residue proline 106–serine 116 coordinates ATP. Aspartate 148 is an active-site residue.

The protein belongs to the GHMP kinase family. IspE subfamily.

It catalyses the reaction 4-CDP-2-C-methyl-D-erythritol + ATP = 4-CDP-2-C-methyl-D-erythritol 2-phosphate + ADP + H(+). It participates in isoprenoid biosynthesis; isopentenyl diphosphate biosynthesis via DXP pathway; isopentenyl diphosphate from 1-deoxy-D-xylulose 5-phosphate: step 3/6. Functionally, catalyzes the phosphorylation of the position 2 hydroxy group of 4-diphosphocytidyl-2C-methyl-D-erythritol. The protein is 4-diphosphocytidyl-2-C-methyl-D-erythritol kinase of Prochlorococcus marinus (strain SARG / CCMP1375 / SS120).